We begin with the raw amino-acid sequence, 432 residues long: Amino-acid acetyltransferase (432 aa).

Residues 286–425 (EKLREATIED…ASLYNYQRQS (140 aa)) enclose the N-acetyltransferase domain.

Belongs to the acetyltransferase family. ArgA subfamily.

It is found in the cytoplasm. It catalyses the reaction L-glutamate + acetyl-CoA = N-acetyl-L-glutamate + CoA + H(+). Its pathway is amino-acid biosynthesis; L-arginine biosynthesis; N(2)-acetyl-L-ornithine from L-glutamate: step 1/4. The polypeptide is Amino-acid acetyltransferase (Azotobacter vinelandii (strain DJ / ATCC BAA-1303)).